The following is an 81-amino-acid chain: Photosystem I iron-sulfur center (81 aa).

2 4Fe-4S ferredoxin-type domains span residues 2-31 (SHAVKIYDTCIGCTQCVRACPLDVLEMVPW) and 39-68 (IAASPRTEDCVGCKRCETACPTHFLSIRVY). Residues Cys-11, Cys-14, Cys-17, Cys-21, Cys-48, Cys-51, Cys-54, and Cys-58 each contribute to the [4Fe-4S] cluster site.

As to quaternary structure, the cyanobacterial PSI reaction center is composed of one copy each of PsaA,B,C,D,E,F,I,J,K,L,M and X, and forms trimeric complexes. The cofactor is [4Fe-4S] cluster.

Its subcellular location is the cellular thylakoid membrane. The catalysed reaction is reduced [plastocyanin] + hnu + oxidized [2Fe-2S]-[ferredoxin] = oxidized [plastocyanin] + reduced [2Fe-2S]-[ferredoxin]. Apoprotein for the two 4Fe-4S centers FA and FB of photosystem I (PSI); essential for photochemical activity. FB is the terminal electron acceptor of PSI, donating electrons to ferredoxin. The C-terminus interacts with PsaA/B/D and helps assemble the protein into the PSI complex. Required for binding of PsaD and PsaE to PSI. PSI is a plastocyanin/cytochrome c6-ferredoxin oxidoreductase, converting photonic excitation into a charge separation, which transfers an electron from the donor P700 chlorophyll pair to the spectroscopically characterized acceptors A0, A1, FX, FA and FB in turn. The sequence is that of Photosystem I iron-sulfur center from Prochlorococcus marinus (strain MIT 9313).